We begin with the raw amino-acid sequence, 510 residues long: NAD(P)H-quinone oxidoreductase subunit 2 B, chloroplastic (510 aa).

A run of 12 helical transmembrane segments spans residues 24–44 (LLLF…GLIL), 57–77 (IPWL…ALLF), 99–119 (IFQF…VEYI), 124–144 (MAIT…MFLC), 183–203 (YLLM…WLYG), 227–247 (PGIS…LSPA), 295–315 (WHLL…LIAI), 323–343 (MLAY…IVGD), 347–367 (GYAS…GTFA), 395–415 (ALSS…AGFF), 418–438 (LHLF…IGLL), and 484–504 (MIVC…IIAI).

Belongs to the complex I subunit 2 family. As to quaternary structure, NDH is composed of at least 16 different subunits, 5 of which are encoded in the nucleus.

The protein localises to the plastid. The protein resides in the chloroplast thylakoid membrane. It carries out the reaction a plastoquinone + NADH + (n+1) H(+)(in) = a plastoquinol + NAD(+) + n H(+)(out). It catalyses the reaction a plastoquinone + NADPH + (n+1) H(+)(in) = a plastoquinol + NADP(+) + n H(+)(out). NDH shuttles electrons from NAD(P)H:plastoquinone, via FMN and iron-sulfur (Fe-S) centers, to quinones in the photosynthetic chain and possibly in a chloroplast respiratory chain. The immediate electron acceptor for the enzyme in this species is believed to be plastoquinone. Couples the redox reaction to proton translocation, and thus conserves the redox energy in a proton gradient. The chain is NAD(P)H-quinone oxidoreductase subunit 2 B, chloroplastic from Calycanthus floridus var. glaucus (Eastern sweetshrub).